The following is a 926-amino-acid chain: DNA mismatch repair protein MutS (926 aa).

Positions 1-67 (MAASPNPLQG…NPNQINDLDQ (67 aa)) are disordered. 2 stretches are compositionally biased toward polar residues: residues 18 to 44 (QSTTNGGKETNNSIGSSENLSNQQLKS) and 57 to 67 (KNPNQINDLDQ). 726 to 733 (GPNASGKS) contributes to the ATP binding site.

The protein belongs to the DNA mismatch repair MutS family.

This protein is involved in the repair of mismatches in DNA. It is possible that it carries out the mismatch recognition step. This protein has a weak ATPase activity. The protein is DNA mismatch repair protein MutS of Prochlorococcus marinus (strain NATL1A).